The following is a 281-amino-acid chain: Putative pyruvate, phosphate dikinase regulatory protein (281 aa).

153-160 contributes to the ADP binding site; the sequence is GISRTSKT.

It belongs to the pyruvate, phosphate/water dikinase regulatory protein family. PDRP subfamily.

It carries out the reaction N(tele)-phospho-L-histidyl/L-threonyl-[pyruvate, phosphate dikinase] + ADP = N(tele)-phospho-L-histidyl/O-phospho-L-threonyl-[pyruvate, phosphate dikinase] + AMP + H(+). The enzyme catalyses N(tele)-phospho-L-histidyl/O-phospho-L-threonyl-[pyruvate, phosphate dikinase] + phosphate + H(+) = N(tele)-phospho-L-histidyl/L-threonyl-[pyruvate, phosphate dikinase] + diphosphate. In terms of biological role, bifunctional serine/threonine kinase and phosphorylase involved in the regulation of the pyruvate, phosphate dikinase (PPDK) by catalyzing its phosphorylation/dephosphorylation. The polypeptide is Putative pyruvate, phosphate dikinase regulatory protein (Bdellovibrio bacteriovorus (strain ATCC 15356 / DSM 50701 / NCIMB 9529 / HD100)).